Here is a 294-residue protein sequence, read N- to C-terminus: 4-hydroxy-tetrahydrodipicolinate synthase (294 aa).

Thr47 provides a ligand contact to pyruvate. Tyr135 acts as the Proton donor/acceptor in catalysis. Lys163 acts as the Schiff-base intermediate with substrate in catalysis. Thr205 serves as a coordination point for pyruvate.

This sequence belongs to the DapA family. As to quaternary structure, homotetramer; dimer of dimers.

The protein resides in the cytoplasm. The enzyme catalyses L-aspartate 4-semialdehyde + pyruvate = (2S,4S)-4-hydroxy-2,3,4,5-tetrahydrodipicolinate + H2O + H(+). The protein operates within amino-acid biosynthesis; L-lysine biosynthesis via DAP pathway; (S)-tetrahydrodipicolinate from L-aspartate: step 3/4. Its function is as follows. Catalyzes the condensation of (S)-aspartate-beta-semialdehyde [(S)-ASA] and pyruvate to 4-hydroxy-tetrahydrodipicolinate (HTPA). The sequence is that of 4-hydroxy-tetrahydrodipicolinate synthase from Rickettsia akari (strain Hartford).